Reading from the N-terminus, the 247-residue chain is Phycobilisome rod-core linker polypeptide CpcG2 (247 aa).

Residues 11 to 189 (SSQNQRVPGY…YWRDKLESER (179 aa)) form the PBS-linker domain. A disordered region spans residues 223–247 (PDTTRNTTPTGIPISVNPSANFPVR).

Belongs to the phycobilisome linker protein family. As to quaternary structure, part of the phycobilisome, a hemidiscoidal structure that is composed of two distinct substructures: a core complex and a number of rods radiating from the core.

It localises to the cellular thylakoid membrane. In terms of biological role, rod-core linker protein required for attachment of phycocyanin to allophycocyanin in cores of phycobilisomes. Linker polypeptides determine the state of aggregation and the location of the disk-shaped phycobiliprotein units within the phycobilisome and modulate their spectroscopic properties in order to mediate a directed and optimal energy transfer. The chain is Phycobilisome rod-core linker polypeptide CpcG2 from Nostoc sp. (strain PCC 7120 / SAG 25.82 / UTEX 2576).